The sequence spans 1500 residues: ABC transporter G family member 42 (1500 aa).

A disordered region spans residues 26-56 (VDEAFMPQNSGGGGGSRGRRRSGRGGTADDD). The 274-residue stretch at 182-455 (LGLVGVRPGR…FESCGFRCPE (274 aa)) folds into the ABC transporter 1 domain. An ATP-binding site is contributed by 215–222 (GPPSSGKT). The ABC transmembrane type-2 1 domain occupies 533-746 (ELLKASFAKE…GYNALAVNEF (214 aa)). The next 7 helical transmembrane spans lie at 551–571 (FVYIFKTIQLIIVALVASTVF), 584–604 (GFVYIGALLFSLIVNMFNGFA), 639–659 (IPFSIIESIVWVIVTYYTIGF), 670–690 (LLLVFLIQQMAGGLFRATAGL), 695–715 (IIAQTGGALALLIFFVLGGFL), 724–744 (WWIWGYWVSPLMYGYNALAVN), and 783–803 (FWIGAAGLLGFTMFFNVLFTL). Residues 822-834 (TAKEAEGNGDARH) are compositionally biased toward basic and acidic residues. The tract at residues 822-850 (TAKEAEGNGDARHTVRNGSTKSNGGNHKE) is disordered. Residues 837–846 (RNGSTKSNGG) are compositionally biased toward polar residues. The ABC transporter 2 domain occupies 894–1151 (MSFDDVNYYV…KMIEYFEAIP (258 aa)). 939–946 (GVSGAGKT) lines the ATP pocket. The ABC transmembrane type-2 2 domain occupies 1224–1438 (GQFRACLWKQ…TVYGLIVTQY (215 aa)). The next 7 helical transmembrane spans lie at 1245–1265 (LVRFSFTLFTALLLGTIFWKI), 1277–1297 (MVIGAMYTAVMFIGINNCATV), 1331–1351 (IPYVFVQTAYYTLIVYAMMSF), 1358–1378 (FFWFFFVSYFSFLYFTYYGMM), 1388–1408 (VAAIFAAAFYSLFNLFSGFFI), 1416–1436 (WWIWYYWLCPLAWTVYGLIVT), and 1472–1492 (VVAPVLVLFAVFFAFMYAICI).

This sequence belongs to the ABC transporter superfamily. ABCG family. PDR (TC 3.A.1.205) subfamily.

The protein resides in the membrane. Functionally, may be a general defense protein. The polypeptide is ABC transporter G family member 42 (Oryza sativa subsp. japonica (Rice)).